A 270-amino-acid chain; its full sequence is Regulatory protein RecX (270 aa).

Belongs to the RecX family.

The protein resides in the cytoplasm. Functionally, modulates RecA activity. In Bacillus cereus (strain 03BB102), this protein is Regulatory protein RecX.